A 417-amino-acid polypeptide reads, in one-letter code: Hydroxysteroid dehydrogenase-like protein 2 (417 aa).

NADP(+) contacts are provided by residues 17-23, Lys42, and Asp74; that span reads GASRGIG. Catalysis depends on Tyr168, which acts as the Proton acceptor. Lys172 serves as a coordination point for NADP(+). Residues 306-414 enclose the SCP2 domain; sequence SSPLQETFKA…KLEKILGQMN (109 aa).

Belongs to the short-chain dehydrogenases/reductases (SDR) family.

It is found in the peroxisome. Its subcellular location is the mitochondrion. In terms of biological role, has apparently no steroid dehydrogenase activity. Might act as a metabolic regulator that affects systemic adaptation to nutritional cues. This is Hydroxysteroid dehydrogenase-like protein 2 (hsdl2) from Xenopus tropicalis (Western clawed frog).